Here is an 83-residue protein sequence, read N- to C-terminus: uncharacterized protein (83 aa).

This sequence belongs to the chlamydial CPn_0710/CT_666/TC_0037 family.

This is an uncharacterized protein from Chlamydia trachomatis serovar D (strain ATCC VR-885 / DSM 19411 / UW-3/Cx).